A 318-amino-acid chain; its full sequence is Cell growth regulator with EF hand domain protein 1 (318 aa).

Positions 1–19 (MLPLTMTVLILLLLPTGQA) are cleaved as a signal peptide. EF-hand domains follow at residues 69–104 (SREQ…ALAP) and 114–149 (PVIL…ALRH). Positions 82, 84, 86, 88, 93, 127, 129, 131, and 138 each coordinate Ca(2+). The disordered stretch occupies residues 177–318 (LRQETQEAPG…HIVQVENDEI (142 aa)). Composition is skewed to basic and acidic residues over residues 186-202 (GPRE…RESL) and 223-233 (GEAEGQAEAKG). 3 tandem repeats follow at residues 219-235 (PGPR…KGDA), 236-252 (PGPR…EGDA), and 253-269 (PGPR…EGDA). Positions 219-286 (PGPRGEAEGQ…GGQAEARENG (68 aa)) are 4 X 17 AA approximate tandem repeats of P-G-P-R-G-E-A-G-G-Q-A-E-A-[KR]-G-D-A. Low complexity predominate over residues 235-272 (APGPRGEAGGQAEAEGDAPGPRGEAGGQAEAEGDAPGP). The 4; approximate repeat unit spans residues 270-286 (PGPRGEAGGQAEARENG). Over residues 281-293 (EARENGEEAKELP) the composition is skewed to basic and acidic residues.

In terms of processing, probably digested extracellularly by an unknown serine protease generating extremely hydrophobic bioactive peptides.

The protein localises to the secreted. Its function is as follows. Mediates cell-cell adhesion in a calcium-dependent manner. Able to inhibit growth in several cell lines. The protein is Cell growth regulator with EF hand domain protein 1 of Homo sapiens (Human).